Here is a 302-residue protein sequence, read N- to C-terminus: Uricase (302 aa).

The residue at position 2 (S2) is an N-acetylserine. Residues K11 and T58 each act as charge relay system in the active site. Residues T58, D59, F160, R177, V228, Q229, and N255 each contribute to the 5-hydroxyisourate site. Residue T58 participates in O2 binding. The urate site is built by T58, D59, F160, R177, V228, Q229, and N255. N255 provides a ligand contact to O2. H257 acts as the Charge relay system in catalysis. Residues 300-302 (SKL) carry the Microbody targeting signal motif.

Belongs to the uricase family. Homotetramer.

The protein resides in the peroxisome. It carries out the reaction urate + O2 + H2O = 5-hydroxyisourate + H2O2. The protein operates within purine metabolism; urate degradation; (S)-allantoin from urate: step 1/3. With respect to regulation, 8-Azaxanthine is one of the most potent competitive inhibitors of uricase activity. Hypoxanthine has only a small inhibitor effect, and caffeine has no effect at all. Azide not only competes with dioxygen but also competes with the substrate for its enzymatic site. Urate oxidase is a cofactorless enzyme involved in the metabolism of purines. Catalyzes, in the presence of molecular oxygen, the hydroxylation of uric acid to metastable 5-hydroxyisourate (5-HIU) which is further degraded to allantoin. In Aspergillus flavus, this protein is Uricase.